We begin with the raw amino-acid sequence, 393 residues long: Ornithine decarboxylase 2 (393 aa).

K62 carries the post-translational modification N6-(pyridoxal phosphate)lysine. Pyridoxal 5'-phosphate contacts are provided by residues S194, G231, and E265–R268. Residue Y314–Y315 participates in substrate binding. The active-site Proton donor; shared with dimeric partner is the C343. Substrate is bound at residue D344. Y371 provides a ligand contact to pyridoxal 5'-phosphate.

It belongs to the Orn/Lys/Arg decarboxylase class-II family. Homodimer. Only the dimer is catalytically active, as the active sites are constructed of residues from both monomers. It depends on pyridoxal 5'-phosphate as a cofactor.

It carries out the reaction L-ornithine + H(+) = putrescine + CO2. It functions in the pathway amine and polyamine biosynthesis; putrescine biosynthesis via L-ornithine pathway; putrescine from L-ornithine: step 1/1. Its activity is regulated as follows. Inhibited by antizyme (AZ) in response to polyamine levels. AZ inhibits the assembly of the functional homodimer by binding to ODC monomers and targeting them for ubiquitin-independent proteolytic destruction by the 26S proteasome. Its function is as follows. Catalyzes the first and rate-limiting step of polyamine biosynthesis that converts ornithine into putrescine, which is the precursor for the polyamines, spermidine and spermine. Polyamines are essential for cell proliferation and are implicated in cellular processes, ranging from DNA replication to apoptosis. The protein is Ornithine decarboxylase 2 (Odc2) of Drosophila melanogaster (Fruit fly).